The sequence spans 290 residues: Phosphatidylglycerol--prolipoprotein diacylglyceryl transferase (290 aa).

7 helical membrane-spanning segments follow: residues 21–41, 60–80, 96–116, 124–144, 199–219, 226–246, and 260–280; these read VSLH…MWLA, LLYA…VLFY, WDGG…MLWF, FFQV…AGRL, SQLY…NVFI, GSVS…VECF, and ISMG…MMIW. Arginine 143 contributes to the a 1,2-diacyl-sn-glycero-3-phospho-(1'-sn-glycerol) binding site.

This sequence belongs to the Lgt family.

The protein localises to the cell inner membrane. The enzyme catalyses L-cysteinyl-[prolipoprotein] + a 1,2-diacyl-sn-glycero-3-phospho-(1'-sn-glycerol) = an S-1,2-diacyl-sn-glyceryl-L-cysteinyl-[prolipoprotein] + sn-glycerol 1-phosphate + H(+). Its pathway is protein modification; lipoprotein biosynthesis (diacylglyceryl transfer). In terms of biological role, catalyzes the transfer of the diacylglyceryl group from phosphatidylglycerol to the sulfhydryl group of the N-terminal cysteine of a prolipoprotein, the first step in the formation of mature lipoproteins. This Yersinia pseudotuberculosis serotype O:1b (strain IP 31758) protein is Phosphatidylglycerol--prolipoprotein diacylglyceryl transferase.